The sequence spans 462 residues: Glutamate--tRNA ligase (462 aa).

The short motif at 11–21 (PSPTGFIHLGN) is the 'HIGH' region element. Over residues 120–131 (KPRYDGTWRPEP) the composition is skewed to basic and acidic residues. The disordered stretch occupies residues 120-140 (KPRYDGTWRPEPGKTLPPIPA). A 'KMSKS' region motif is present at residues 243–247 (KMSKR). Residue lysine 246 participates in ATP binding.

This sequence belongs to the class-I aminoacyl-tRNA synthetase family. Glutamate--tRNA ligase type 1 subfamily. In terms of assembly, monomer.

It is found in the cytoplasm. It carries out the reaction tRNA(Glu) + L-glutamate + ATP = L-glutamyl-tRNA(Glu) + AMP + diphosphate. Functionally, catalyzes the attachment of glutamate to tRNA(Glu) in a two-step reaction: glutamate is first activated by ATP to form Glu-AMP and then transferred to the acceptor end of tRNA(Glu). The protein is Glutamate--tRNA ligase of Polaromonas sp. (strain JS666 / ATCC BAA-500).